The chain runs to 215 residues: Holliday junction branch migration complex subunit RuvA (215 aa).

The segment at 1–67 (MIGWLQGERI…DDGSTLFGFC (67 aa)) is domain I. Residues 68 to 146 (DQQERDLFRT…NWAPLQEPSL (79 aa)) are domain II. Residues 147–158 (SLVDRSDVKAIP) form a flexible linker region. Positions 159–215 (LGEPCLRDLQITLETLGYEDLEIRRAMRAVASGPDVPAEDDGDAWLRASLKWLSQSA) are domain III.

Belongs to the RuvA family. As to quaternary structure, homotetramer. Forms an RuvA(8)-RuvB(12)-Holliday junction (HJ) complex. HJ DNA is sandwiched between 2 RuvA tetramers; dsDNA enters through RuvA and exits via RuvB. An RuvB hexamer assembles on each DNA strand where it exits the tetramer. Each RuvB hexamer is contacted by two RuvA subunits (via domain III) on 2 adjacent RuvB subunits; this complex drives branch migration. In the full resolvosome a probable DNA-RuvA(4)-RuvB(12)-RuvC(2) complex forms which resolves the HJ.

It is found in the cytoplasm. Functionally, the RuvA-RuvB-RuvC complex processes Holliday junction (HJ) DNA during genetic recombination and DNA repair, while the RuvA-RuvB complex plays an important role in the rescue of blocked DNA replication forks via replication fork reversal (RFR). RuvA specifically binds to HJ cruciform DNA, conferring on it an open structure. The RuvB hexamer acts as an ATP-dependent pump, pulling dsDNA into and through the RuvAB complex. HJ branch migration allows RuvC to scan DNA until it finds its consensus sequence, where it cleaves and resolves the cruciform DNA. The polypeptide is Holliday junction branch migration complex subunit RuvA (Synechococcus sp. (strain WH7803)).